The primary structure comprises 419 residues: RING finger protein 150 (419 aa).

An N-terminal signal peptide occupies residues 1 to 34 (MALSVIQACRSLALSTWLLSFCFVHLLCLDFTVA). Topologically, residues 35-197 (EKEEWYTAFV…NLQKYVSRTS (163 aa)) are extracellular. In terms of domain architecture, PA spans 70–172 (SLKREARGVL…PKGRELVLLM (103 aa)). Residues 198–218 (VVFVSISFIILMIISLAWLVF) form a helical membrane-spanning segment. The Cytoplasmic portion of the chain corresponds to 219–419 (YYIQRFRYAN…IDTPTDDPKC (201 aa)). The segment at 267-308 (CAVCIEGYKPNDVVRILPCRHLFHKCCVDPWLVDHRTCPMCK) adopts an RING-type; atypical zinc-finger fold. The segment at 374-419 (SEPLSQDTMPTEQSELQPIASGSSDVSLTTGAGHSDIDTPTDDPKC) is disordered. Polar residues predominate over residues 376 to 405 (PLSQDTMPTEQSELQPIASGSSDVSLTTGA).

The protein resides in the membrane. This is RING finger protein 150 (rnf150) from Danio rerio (Zebrafish).